The following is a 683-amino-acid chain: MAGGATAPAGAKPKQPKQKQKKPSSQARKKPSQKQKAMKPVKQELRKVEKQVRVLKARTNGPKVNDTMKTTVTVGTLVGQTQSGLNRQLRVSFNPLLMKSTEGGSTTPLSIRASMYEMWKPLSVEIFATPLSGFSSVVGSVGFMVITLNGLEASADSIDTIKARRHVQMALGRPYRLKLSARELAGPREGWWLVDTSEAPADAYGPAVDLMLAYATENLLGTSSGSTTSYTGTLWQVEMRVTYAFSTYNPKPGLQTLVSQSITGGQTVTIQPSPDDGSLIMTTNSQQVLALLTPRVAGQRKGKSQTIWAIAGSAVDAAATVLGPWGYLLKGGFWLVRLIFGGSSARNTTTRQYQIYPSVESALTDQPIFGNSTGTQSVTVPICHITEVVNPNAESNNLPPPTTGAQPQPQPPAPIEEILLPLAELTGQPGVPPLYTFDGSSYTPPTNWLGSTILLTGIPAHKRVTGNLAKFGVTNLQMSKVAATALEIYDFTDFGVFFGTGSYLSEGGIHTGKTLIYSLMSGQTPNPWLAANQSGTTWYMPSWAGFPQPGQGDYFLQMQDVTDTTTHTTSVNVYFLVAYRQSRRLIAFFNTGGTARPAPTSMLCLYNVDCGRAPQTPYPTFQSTLQSLNQIGVDAKSDPDSDDDISLAGSVIGDEFDSVDHLEREREDLMRRLRDLDLRRFQI.

Positions 1–13 (MAGGATAPAGAKP) are enriched in low complexity. Disordered regions lie at residues 1–45 (MAGG…KQEL) and 391–413 (PNAESNNLPPPTTGAQPQPQPPA). A compositionally biased stretch (basic residues) spans 14–39 (KQPKQKQKKPSSQARKKPSQKQKAMK). Positions 398-413 (LPPPTTGAQPQPQPPA) are enriched in pro residues.

The protein belongs to the astroviridae capsid polyprotein family. Post-translationally, specific enzymatic cleavages by the host yield mature proteins.

It localises to the virion. In terms of biological role, self-assembles to form an icosahedral T=3 immature capsid. The sequence is that of Capsid polyprotein VP90 from Gallus gallus (Chicken).